Reading from the N-terminus, the 534-residue chain is MADPQATNGTGAACAERDASDVGDVSDVGDARDEGAGRVVAVRGAVVDVAFDGGALPALNEALTIPVDGAAPILAEVHAHLSDAAVRALALGPTGGLRRGAAVRATGGPIRVPVGDAVLGRLLSVTGAPGDDGAALAADVERRPIHRGAPPLAEQKSANALFATGIKVIDLLAPLAQGGKAAMFGGAGVGKTVLVMELIHAMVERYRGISVFAGIGERSREGHEMLLDMRGSGVLGRTVLVYGQMNEPPGARWRVPLTALAIAEYFRDERAQNVLLLMDNVFRFVQAGAEVSGLLGRLPSRVGYQPTLASEVAALQERIASVEGAAVTAIEAVYVPADDFTDPAVTAIAAHVDSMVVLSRAMAAEGMYPAIDPVASSSILLDPLVVGEAHVEVAIEVRRVIEHYRELQDVIALLGIDELGADDRRLVGRARRLQRFLTQPFAVTEAFTGQAGASVEIADTIAGCRAILRGDCDDWRESSLYMVGTLDDARRKEAAAREADARREAAAAASGAGPGTTSDPASGSAEPQGARHGR.

Polar residues predominate over residues 1–10; that stretch reads MADPQATNGT. The interval 1-30 is disordered; that stretch reads MADPQATNGTGAACAERDASDVGDVSDVGD. Position 185–192 (185–192) interacts with ATP; it reads GGAGVGKT. Positions 494 to 505 are enriched in basic and acidic residues; sequence AAAREADARREA. The disordered stretch occupies residues 494–534; sequence AAAREADARREAAAAASGAGPGTTSDPASGSAEPQGARHGR.

Belongs to the ATPase alpha/beta chains family. As to quaternary structure, F-type ATPases have 2 components, CF(1) - the catalytic core - and CF(0) - the membrane proton channel. CF(1) has five subunits: alpha(3), beta(3), gamma(1), delta(1), epsilon(1). CF(0) has three main subunits: a(1), b(2) and c(9-12). The alpha and beta chains form an alternating ring which encloses part of the gamma chain. CF(1) is attached to CF(0) by a central stalk formed by the gamma and epsilon chains, while a peripheral stalk is formed by the delta and b chains.

The protein resides in the cell inner membrane. It catalyses the reaction ATP + H2O + 4 H(+)(in) = ADP + phosphate + 5 H(+)(out). Its function is as follows. Produces ATP from ADP in the presence of a proton gradient across the membrane. The catalytic sites are hosted primarily by the beta subunits. This Burkholderia pseudomallei (strain 668) protein is ATP synthase subunit beta 2.